We begin with the raw amino-acid sequence, 275 residues long: Polyamine aminopropyltransferase (275 aa).

Positions 2–235 constitute a PABS domain; it reads ELWFTEKQTK…GLWTFTIGSK (234 aa). Gln-31 serves as a coordination point for S-methyl-5'-thioadenosine. His-62 and Asp-86 together coordinate spermidine. S-methyl-5'-thioadenosine is bound by residues Glu-106 and 137 to 138; that span reads DG. Asp-155 serves as the catalytic Proton acceptor. 155 to 158 provides a ligand contact to spermidine; it reads DSTE. An S-methyl-5'-thioadenosine-binding site is contributed by Pro-162.

Belongs to the spermidine/spermine synthase family. In terms of assembly, homodimer or homotetramer.

Its subcellular location is the cytoplasm. The catalysed reaction is S-adenosyl 3-(methylsulfanyl)propylamine + putrescine = S-methyl-5'-thioadenosine + spermidine + H(+). Its pathway is amine and polyamine biosynthesis; spermidine biosynthesis; spermidine from putrescine: step 1/1. Its function is as follows. Catalyzes the irreversible transfer of a propylamine group from the amino donor S-adenosylmethioninamine (decarboxy-AdoMet) to putrescine (1,4-diaminobutane) to yield spermidine. The polypeptide is Polyamine aminopropyltransferase (Bacillus cytotoxicus (strain DSM 22905 / CIP 110041 / 391-98 / NVH 391-98)).